We begin with the raw amino-acid sequence, 251 residues long: 2,3-bisphosphoglycerate-dependent phosphoglycerate mutase (251 aa).

Residues 11 to 18 (RHGNSDWN), 24 to 25 (TG), R63, 90 to 93 (ERHY), K101, 117 to 118 (RR), and 185 to 186 (GN) each bind substrate. The active-site Tele-phosphohistidine intermediate is the H12. The active-site Proton donor/acceptor is the E90. Residues 117–142 (RRSFDVPPPPIDDDDEYSQSRDPRYA) form a disordered region.

Belongs to the phosphoglycerate mutase family. BPG-dependent PGAM subfamily.

The enzyme catalyses (2R)-2-phosphoglycerate = (2R)-3-phosphoglycerate. Its pathway is carbohydrate degradation; glycolysis; pyruvate from D-glyceraldehyde 3-phosphate: step 3/5. Its function is as follows. Catalyzes the interconversion of 2-phosphoglycerate and 3-phosphoglycerate. The protein is 2,3-bisphosphoglycerate-dependent phosphoglycerate mutase of Clavibacter michiganensis subsp. michiganensis (strain NCPPB 382).